We begin with the raw amino-acid sequence, 873 residues long: Zinc fingers and homeoboxes protein 1 (873 aa).

Positions 24–63 (LISDLDEGPPVLTPVENTRAESISSDEEVHESVDSDNQQN) are disordered. Phosphothreonine is present on T36. A phosphoserine mark is found at S45, S47, and S48. 2 C2H2-type zinc fingers span residues 70-93 (YECKYCTFQTPDLNMFTFHVDSEH) and 102-125 (YVCVECNFLTKRYDALSEHNLKYH). K159 participates in a covalent cross-link: Glycyl lysine isopeptide (Lys-Gly) (interchain with G-Cter in SUMO2). The segment at 200-236 (HNSVEDVPEEKENEIKPDREEIVENPSSSASESNTST) is disordered. S202 carries the phosphoserine modification. Positions 212–221 (NEIKPDREEI) are enriched in basic and acidic residues. Low complexity predominate over residues 223–236 (ENPSSSASESNTST). The tract at residues 272–432 (NSNLIPKVLI…QNNIQKSQVP (161 aa)) is required for dimerization. The interval 272 to 564 (NSNLIPKVLI…AQPKQSWNPF (293 aa)) is required for interaction with NFYA. The segment at residues 284–346 (NSIPTYNAAL…LKHGVSWTPE (63 aa)) is a DNA-binding region (homeobox 1). Residues K441, K454, K485, and K629 each participate in a glycyl lysine isopeptide (Lys-Gly) (interchain with G-Cter in SUMO2) cross-link. 2 DNA-binding regions (homeobox) span residues 464-526 (SFGI…KSNQ) and 569-630 (PQKF…EEKM). Disordered stretches follow at residues 626–667 (KEEK…ICKK) and 732–769 (SSMNGLSSLRKRGRGRPKGRGRGRPRGRPRGSKRINNW). Position 648 is a phosphoserine (S648). The homeobox 4 DNA-binding region spans 660–722 (STGKICKKTP…YAWKNGNLKW (63 aa)). The segment at 734 to 768 (MNGLSSLRKRGRGRPKGRGRGRPRGRPRGSKRINN) is required for nuclear localization. Residues 740 to 764 (LRKRGRGRPKGRGRGRPRGRPRGSK) show a composition bias toward basic residues. A Phosphoserine modification is found at S774. Positions 777-832 (KFKTGTAILKDYYLKHKFLNEQDLDELVNKSHMGYEQVREWFAERQRRSELGIELF) form a DNA-binding region, homeobox 5. Residues 829–873 (IELFEENEEEDEVIDDQEEDEEETDDSDTWEPPRHVKRKLSKSDD) form a disordered region. Positions 831–857 (LFEENEEEDEVIDDQEEDEEETDDSDT) are enriched in acidic residues. The segment at 831–873 (LFEENEEEDEVIDDQEEDEEETDDSDTWEPPRHVKRKLSKSDD) is required for repressor activity. Over residues 863-873 (HVKRKLSKSDD) the composition is skewed to basic residues.

Belongs to the ZHX family. Forms homodimers. Heterodimer (via HD1 domain) with ZHX2 (via HD1 domain). Also forms a heterodimer with ZHX3 which is a prerequisite for repressor activity. Interacts with ATF7IP and NFYA. Interacts (via homeobox domains) with DNMT3B (via PWWP domain).

It localises to the nucleus. Functionally, acts as a transcriptional repressor. Increases DNMT3B-mediated repressive transcriptional activity when DNMT3B is tethered to DNA. May link molecule between DNMT3B and other co-repressor proteins. The chain is Zinc fingers and homeoboxes protein 1 (ZHX1) from Pan troglodytes (Chimpanzee).